Consider the following 421-residue polypeptide: Testin (421 aa).

The 108-residue stretch at 92 to 199 folds into the PET domain; that stretch reads MILTNPVAAK…GDVKLPCEMD (108 aa). Residues 133–164 form a disordered region; the sequence is EKQPVAGSEGAQYRKKQLAKQLPAHDQDPSKC. Over residues 155–164 the composition is skewed to basic and acidic residues; sequence PAHDQDPSKC. 3 LIM zinc-binding domains span residues 234 to 297, 299 to 359, and 362 to 421; these read YSCY…CDSE, PRCA…NHAV, and QGCH…KRMS.

Belongs to the prickle / espinas / testin family. As to quaternary structure, interacts via LIM domain 1 with ZYX. Interacts (via LIM domain 3) with ENAH and VASP. Interacts with ALKBH4, talin, actin, alpha-actinin, GRIP1 and PXN. Interacts (via LIM domain 2) with ACTL7A (via N-terminus). Heterodimer with ACTL7A; the heterodimer interacts with ENAH to form a heterotrimer.

It localises to the cytoplasm. It is found in the cell junction. The protein localises to the focal adhesion. In terms of biological role, scaffold protein that may play a role in cell adhesion, cell spreading and in the reorganization of the actin cytoskeleton. Plays a role in the regulation of cell proliferation. May act as a tumor suppressor. The chain is Testin (TES) from Pan troglodytes (Chimpanzee).